Here is a 210-residue protein sequence, read N- to C-terminus: Acetoin utilization protein AcuA (210 aa).

One can recognise an N-acetyltransferase domain in the interval 19–189 (VLIEGPISPE…ANCLMARIGK (171 aa)).

The protein belongs to the acetyltransferase family. In terms of assembly, monomer.

It participates in ketone degradation; acetoin degradation. Functionally, part of the acuABC operon, which is possibly involved in the breakdown of acetoin and butanediol. Acts as an acetyltransferase inactivating acetyl-CoA synthetase AcsA via acetylation at a Lys residue. The sequence is that of Acetoin utilization protein AcuA from Bacillus licheniformis (strain ATCC 14580 / DSM 13 / JCM 2505 / CCUG 7422 / NBRC 12200 / NCIMB 9375 / NCTC 10341 / NRRL NRS-1264 / Gibson 46).